We begin with the raw amino-acid sequence, 355 residues long: Guanine nucleotide-binding protein G(z) subunit alpha (355 aa).

Positions 1–14 (MGCRQSSEEKEAAR) are enriched in basic and acidic residues. The tract at residues 1–26 (MGCRQSSEEKEAARRSRRIDRHLRSE) is disordered. Residue glycine 2 is the site of N-myristoyl glycine attachment. Cysteine 3 carries S-palmitoyl cysteine lipidation. The region spanning 32-355 (REIKLLLLGT…QNNLKYIGLC (324 aa)) is the G-alpha domain. Positions 35 to 48 (KLLLLGTSNSGKST) are G1 motif. GTP contacts are provided by residues 40-47 (GTSNSGKS), 176-182 (LRSRDMT), 201-205 (DVGGQ), 270-273 (NKKD), and alanine 327. Mg(2+) contacts are provided by serine 47 and threonine 182. The segment at 174–182 (DILRSRDMT) is G2 motif. Residues 197–206 (FKMVDVGGQR) are G3 motif. Residues 266–273 (ILFLNKKD) are G4 motif. Residues 325-330 (TCATDT) form a G5 motif region.

This sequence belongs to the G-alpha family. G(i/o/t/z) subfamily. As to quaternary structure, G-proteins are composed of 3 units; alpha, beta and gamma. The alpha chain contains the guanine nucleotide binding site. Interacts with ADGRB2.

It localises to the membrane. Functionally, guanine nucleotide-binding proteins (G proteins) are involved as modulators or transducers in various transmembrane signaling systems. The chain is Guanine nucleotide-binding protein G(z) subunit alpha (Gnaz) from Mus musculus (Mouse).